The primary structure comprises 212 residues: Thymidylate kinase (212 aa).

An ATP-binding site is contributed by 10-17 (GLEGAGKT).

Belongs to the thymidylate kinase family.

It catalyses the reaction dTMP + ATP = dTDP + ADP. Phosphorylation of dTMP to form dTDP in both de novo and salvage pathways of dTTP synthesis. The sequence is that of Thymidylate kinase from Cronobacter sakazakii (strain ATCC BAA-894) (Enterobacter sakazakii).